Reading from the N-terminus, the 465-residue chain is CCA-adding enzyme (465 aa).

Residues Ser63 and Lys66 each contribute to the ATP site. Residues Ser63 and Lys66 each contribute to the CTP site. Positions 75, 77, and 127 each coordinate Mg(2+). ATP contacts are provided by His149, Lys171, and Tyr180. The CTP site is built by His149, Lys171, and Tyr180.

Belongs to the tRNA nucleotidyltransferase/poly(A) polymerase family. Archaeal CCA-adding enzyme subfamily. Homodimer. Mg(2+) serves as cofactor.

The catalysed reaction is a tRNA precursor + 2 CTP + ATP = a tRNA with a 3' CCA end + 3 diphosphate. It catalyses the reaction a tRNA with a 3' CCA end + 2 CTP + ATP = a tRNA with a 3' CCACCA end + 3 diphosphate. Catalyzes the addition and repair of the essential 3'-terminal CCA sequence in tRNAs without using a nucleic acid template. Adds these three nucleotides in the order of C, C, and A to the tRNA nucleotide-73, using CTP and ATP as substrates and producing inorganic pyrophosphate. tRNA 3'-terminal CCA addition is required both for tRNA processing and repair. Also involved in tRNA surveillance by mediating tandem CCA addition to generate a CCACCA at the 3' terminus of unstable tRNAs. While stable tRNAs receive only 3'-terminal CCA, unstable tRNAs are marked with CCACCA and rapidly degraded. The sequence is that of CCA-adding enzyme from Aeropyrum pernix (strain ATCC 700893 / DSM 11879 / JCM 9820 / NBRC 100138 / K1).